A 708-amino-acid polypeptide reads, in one-letter code: Exocyst complex component 5 (708 aa).

An N-acetylalanine modification is found at alanine 2. A coiled-coil region spans residues 40–101 (KRLLEEFVNH…AFQHFQELDE (62 aa)). A phosphothreonine mark is found at threonine 122, threonine 395, and threonine 405. Position 412 is a phosphoserine (serine 412).

This sequence belongs to the SEC10 family. As to quaternary structure, the exocyst complex is composed of EXOC1, EXOC2, EXOC3, EXOC4, EXOC5, EXOC6, EXOC7 and EXOC8. Interacts with EXOC3L1. Ubiquitous.

The protein localises to the cytoplasm. It is found in the midbody. In terms of biological role, component of the exocyst complex involved in the docking of exocytic vesicles with fusion sites on the plasma membrane. This is Exocyst complex component 5 (EXOC5) from Homo sapiens (Human).